We begin with the raw amino-acid sequence, 276 residues long: 2-dehydro-3-deoxyphosphooctonate aldolase (276 aa).

The protein belongs to the KdsA family.

It is found in the cytoplasm. The catalysed reaction is D-arabinose 5-phosphate + phosphoenolpyruvate + H2O = 3-deoxy-alpha-D-manno-2-octulosonate-8-phosphate + phosphate. Its pathway is carbohydrate biosynthesis; 3-deoxy-D-manno-octulosonate biosynthesis; 3-deoxy-D-manno-octulosonate from D-ribulose 5-phosphate: step 2/3. It functions in the pathway bacterial outer membrane biogenesis; lipopolysaccharide biosynthesis. This chain is 2-dehydro-3-deoxyphosphooctonate aldolase, found in Xanthomonas campestris pv. campestris (strain 8004).